A 250-amino-acid chain; its full sequence is Doublesex- and mab-3-related transcription factor dmd-3 (250 aa).

A DNA-binding region (DM 1) is located at residues 19–68; the sequence is CQRCLNHGLREKRKNHKLSCTFRFCQCSNCIMVERRRQLNSRLMQIDGSR. The segment covering 90–100 has biased composition (polar residues); the sequence is CTSQSETTNES. Residues 90–115 are disordered; sequence CTSQSETTNESSGEDKDDGKPKERRP. Residues 102–115 are compositionally biased toward basic and acidic residues; it reads GEDKDDGKPKERRP. Residues 117–164 constitute a DNA-binding region (DM 2); sequence CQRCAQHSVVNRLKGHKRACPFRDCFCAKCQVVVERQKLMADQIKLRR. Residues 166–201 form a disordered region; sequence QKREKNNLNSEREAPIAHSMTPSPIDTVTTTTTPTS. Residues 169–180 are compositionally biased toward basic and acidic residues; that stretch reads EKNNLNSEREAP. The span at 186-201 shows a compositional bias: low complexity; it reads TPSPIDTVTTTTTPTS.

This sequence belongs to the DMRT family. As to expression, in males, expressed in the tail tip. Specifically, expressed in 15 male-specific muscles of the tail tip called the diagonal muscles, and also in core body muscles of both males and hermaphrodites. In males, expressed in ray A-neurons. In males, expressed in PHC sensory neurons. In males, it is also expressed in the hindgut, B lineage and somatic gonad. In hermaphrodites, expressed in the anchor cell only.

It is found in the nucleus. The protein localises to the perikaryon. Its function is as follows. Transcriptional activator which promotes male-specific development. Acts partially redundantly with the transcription factor mab-3 to coordinate tail tip cell fusion and retraction and thereby regulate male tail tip morphogenesis. This is most likely through the regulation of downstream effectors such as eff-1. May also negatively regulate the expression of other proteins implicated in male tail morphogenesis including nhr-25, vav-1 and arl-1 in tail tip cells. In males, plays a role in the development of ray A-neurons by negatively regulating the activity of the transcription factor ast-1. Plays a role in the male-specific differentiation of PHC sensory neurons into densely connected hub sensory neurons. Plays a role in male mating behavior. This chain is Doublesex- and mab-3-related transcription factor dmd-3, found in Caenorhabditis elegans.